Here is a 261-residue protein sequence, read N- to C-terminus: Small ribosomal subunit protein uS2 (261 aa).

This sequence belongs to the universal ribosomal protein uS2 family.

The chain is Small ribosomal subunit protein uS2 from Thermodesulfovibrio yellowstonii (strain ATCC 51303 / DSM 11347 / YP87).